The sequence spans 103 residues: Small ribosomal subunit protein uS14c (103 aa).

The tract at residues 34-56 (KVSPLSLSEKTKMREKLQSLPRN) is disordered.

It belongs to the universal ribosomal protein uS14 family. In terms of assembly, part of the 30S ribosomal subunit.

The protein localises to the plastid. It localises to the chloroplast. Its function is as follows. Binds 16S rRNA, required for the assembly of 30S particles. The chain is Small ribosomal subunit protein uS14c from Brachypodium distachyon (Purple false brome).